A 158-amino-acid chain; its full sequence is ATP synthase subunit delta (158 aa).

It belongs to the ATPase delta chain family. As to quaternary structure, F-type ATPases have 2 components, F(1) - the catalytic core - and F(0) - the membrane proton channel. F(1) has five subunits: alpha(3), beta(3), gamma(1), delta(1), epsilon(1). F(0) has three main subunits: a(1), b(2) and c(10-14). The alpha and beta chains form an alternating ring which encloses part of the gamma chain. F(1) is attached to F(0) by a central stalk formed by the gamma and epsilon chains, while a peripheral stalk is formed by the delta and b chains.

The protein resides in the cell membrane. Its function is as follows. F(1)F(0) ATP synthase produces ATP from ADP in the presence of a proton or sodium gradient. F-type ATPases consist of two structural domains, F(1) containing the extramembraneous catalytic core and F(0) containing the membrane proton channel, linked together by a central stalk and a peripheral stalk. During catalysis, ATP synthesis in the catalytic domain of F(1) is coupled via a rotary mechanism of the central stalk subunits to proton translocation. This protein is part of the stalk that links CF(0) to CF(1). It either transmits conformational changes from CF(0) to CF(1) or is implicated in proton conduction. The polypeptide is ATP synthase subunit delta (Roseiflexus castenholzii (strain DSM 13941 / HLO8)).